A 504-amino-acid polypeptide reads, in one-letter code: Anthocyanidin 3-O-glucoside 5-O-glucosyltransferase (504 aa).

His23 (proton acceptor) is an active-site residue. His23 lines the an anthocyanidin pocket. Residues 107–126 form a disordered region; it reads TKKGQGQGQGQGQGQGQGQG. The span at 111–125 shows a compositional bias: gly residues; the sequence is QGQGQGQGQGQGQGQ. Thr157, Gln377, His392, Trp395, Asn396, Ser397, Glu400, Asp416, and Gln417 together coordinate UDP-alpha-D-glucose.

It belongs to the UDP-glycosyltransferase family. Predominantly expressed in petals and weakly in filaments. Not expressed in leaves, stems and other floral organs.

It carries out the reaction an anthocyanidin 3-O-beta-D-glucoside + UDP-alpha-D-glucose = an anthocyanidin 3,5-di-O-beta-D-glucoside + UDP + 2 H(+). The protein operates within pigment biosynthesis; anthocyanin biosynthesis. Its function is as follows. Catalyzes the glucosylation at the O-5 position of anthocyanidin 3-glucosides to form anthocyanidin 3,5-di-O-glucosides using UDP-glucose as sugar donor. Anthocyanidin 3,5-di-O-glucosides are molecules that are responsible for pigmentation. Involved in biosynsthesis of accumulate gentiodelphin, a unique polyacylated delphinidin-type anthocyanin, in the petals. Also acts on anthocyanidin 3-O-(6-O-malonylglucoside). Much less active with hydroxycinnamoylglucose derivatives. No activity in the absence of the 3-O-glucoside group. This is Anthocyanidin 3-O-glucoside 5-O-glucosyltransferase (5GT7) from Gentiana triflora (Clustered gentian).